Consider the following 270-residue polypeptide: MENIGRQRPIGVFDSGIGGLTNVRALMERLPMENIIYFGDTARVPYGTKSKATIENFSMQIVDFLLGHDVKAMVIACNTIAAVAGRKIRQKTGNMPVLDVISAGAKAALATTRNNKIGIIATNTTVNSNAYARAIHRDNPDTLVRTQAAPLLVPLVEEGWLEHEVTRLTVCEYLKPLLADGIDTLVLGCTHFPLLKPLIGREAHNVALVDSAITTAEETARVLAQEGLLDTGNNNPDYRFYVSDIPLKFRTIGERFLGRTMEQIEMVSLG.

Residues 14 to 15 (DS) and 46 to 47 (YG) contribute to the substrate site. Cys-77 serves as the catalytic Proton donor/acceptor. Residue 78–79 (NT) coordinates substrate. Cys-189 acts as the Proton donor/acceptor in catalysis. 190–191 (TH) is a binding site for substrate.

This sequence belongs to the aspartate/glutamate racemases family.

It carries out the reaction L-glutamate = D-glutamate. The protein operates within cell wall biogenesis; peptidoglycan biosynthesis. Its function is as follows. Provides the (R)-glutamate required for cell wall biosynthesis. This Neisseria gonorrhoeae (strain ATCC 700825 / FA 1090) protein is Glutamate racemase.